Here is a 792-residue protein sequence, read N- to C-terminus: uncharacterized protein (792 aa).

25 repeat units span residues 91 to 102 (NSSTNATTTASI), 103 to 114 (NVRTSATTTASI), 115 to 126 (NVRTSATTTEST), 127 to 138 (NSNTNATTTEST), 139 to 150 (NSSTNATTTASI), 151 to 162 (NVRTSATTTEST), 163 to 174 (NSSTNATTTASI), 175 to 186 (NVRTSATTTEST), 187 to 198 (NSSTNATTTASI), 199 to 210 (NVRTSATTTEST), 211 to 222 (NSNTNASTNATT), 223 to 234 (NSSTNATTTAST), 235 to 246 (NVRTSATTNATT), 247 to 258 (NSSTNATTTAST), 259 to 270 (NVRTSATTTAST), 271 to 282 (NVRTSATTTASI), 283 to 294 (NVRTSATTTESI), 295 to 306 (NSSTNATTTEST), 307 to 318 (NSNTSATTTEST), 319 to 330 (DSNTNATTTASI), 331 to 342 (NVRTSATTTEST), 343 to 354 (NSNTSATTTEST), 355 to 366 (DSNTSATTTAST), 367 to 378 (NSSTNATTTAST), and 379 to 390 (NSSTNATTTEST). The tract at residues 91-390 (NSSTNATTTA…STNATTTEST (300 aa)) is 25 X 12 AA tandem repeat of N-[SV]-[RS]-T-[NS]-A-T-T-T-[AE]-[ST]-[IT]. A disordered region spans residues 113-417 (SINVRTSATT…RFHPVTDINK (305 aa)). The segment covering 118–393 (TSATTTESTN…ATTTESTNAS (276 aa)) has biased composition (low complexity). Positions 394 to 417 (AKEDANKDGNAEDNRFHPVTDINK) are enriched in basic and acidic residues.

This is an uncharacterized protein from Saccharomyces cerevisiae (strain ATCC 204508 / S288c) (Baker's yeast).